Here is a 358-residue protein sequence, read N- to C-terminus: Isopentenyl-diphosphate delta-isomerase (358 aa).

12-13 (RK) contacts substrate. FMN-binding positions include 69–71 (AMT), Ser-99, and Asn-128. Gln-158 is a binding site for substrate. Glu-159 is a binding site for Mg(2+). FMN-binding positions include Lys-190, Thr-220, 267 to 269 (GIR), and 288 to 289 (AG).

The protein belongs to the IPP isomerase type 2 family. Homooctamer. Dimer of tetramers. The cofactor is FMN. NADPH is required as a cofactor. Requires Mg(2+) as cofactor.

The protein localises to the cytoplasm. It carries out the reaction isopentenyl diphosphate = dimethylallyl diphosphate. Functionally, involved in the biosynthesis of isoprenoids. Catalyzes the 1,3-allylic rearrangement of the homoallylic substrate isopentenyl (IPP) to its allylic isomer, dimethylallyl diphosphate (DMAPP). The protein is Isopentenyl-diphosphate delta-isomerase of Listeria monocytogenes serovar 1/2a (strain ATCC BAA-679 / EGD-e).